We begin with the raw amino-acid sequence, 3564 residues long: CUB and sushi domain-containing protein 1 (3564 aa).

The signal sequence occupies residues 1-29 (MTAWRKFKSLLLPLVLAVLCAGLLTAAKG). Residues 30 to 3487 (QNCGGLVQGP…NHYQGTSSGS (3458 aa)) lie on the Extracellular side of the membrane. 10 disulfide bridges follow: Cys-32/Cys-58, Cys-145/Cys-185, Cys-171/Cys-202, Cys-208/Cys-234, Cys-349/Cys-389, Cys-375/Cys-406, Cys-411/Cys-437, Cys-527/Cys-567, Cys-553/Cys-580, and Cys-584/Cys-610. The region spanning 32-140 (CGGLVQGPNG…QGFKAMYEVL (109 aa)) is the CUB 1 domain. N-linked (GlcNAc...) asparagine glycosylation is found at Asn-40 and Asn-57. The Sushi 1 domain occupies 143–204 (HTCGNPGEIL…WDFPAPFCRA (62 aa)). The region spanning 208 to 312 (CGGTLRGTSG…KGFNAQFQVK (105 aa)) is the CUB 2 domain. Residues 347–408 (DMCPDPGIPD…WNDHRPICRA (62 aa)) enclose the Sushi 2 domain. In terms of domain architecture, CUB 3 spans 411–522 (CGSNLRGPSG…PGFKAVYQEI (112 aa)). Residues 525–582 (GGCGDPGIPAYGKRTGSSFLHGDTLTFECQAAFELVGERVITCQKNNQWSGNKPSCVF) form the Sushi 3 domain. The CUB 4 domain maps to 584–692 (CFFNFTAPSG…RGFNITYTTF (109 aa)). Residues Asn-587 and Asn-686 are each glycosylated (N-linked (GlcNAc...) asparagine). The region spanning 695-756 (NECHDPGIPV…WSSTVPRCEA (62 aa)) is the Sushi 4 domain. 6 cysteine pairs are disulfide-bonded: Cys-697–Cys-738, Cys-723–Cys-754, Cys-758–Cys-784, Cys-873–Cys-913, Cys-899–Cys-926, and Cys-930–Cys-956. Positions 758–866 (CGGHLTASSG…VGFLIHYESV (109 aa)) constitute a CUB 5 domain. A Sushi 5 domain is found at 871–928 (DSCLDPGIPVNGQRHGSNFGIRSTVTFSCDPGYTLSDDEPLVCEKNHQWNHALPSCDA). The CUB 6 domain occupies 930–1040 (CGGYIHGKSG…EGFNITFAEY (111 aa)). N-linked (GlcNAc...) asparagine glycans are attached at residues Asn-955, Asn-1015, and Asn-1034. In terms of domain architecture, Sushi 6 spans 1043 to 1102 (EPCDDPGVPAFSRRIGFQFGVGDTLAFTCFQGYRLEGATKLTCLGGGRRVWSAPLPRCVA). 3 cysteine pairs are disulfide-bonded: Cys-1045–Cys-1085, Cys-1071–Cys-1100, and Cys-1104–Cys-1130. In terms of domain architecture, CUB 7 spans 1104–1212 (CGASVKGNEG…QGFQLTYTSF (109 aa)). N-linked (GlcNAc...) asparagine glycosylation is found at Asn-1184 and Asn-1197. The region spanning 1215–1275 (VKCEDPGIPN…WDKPMPSCVA (61 aa)) is the Sushi 7 domain. 12 disulfides stabilise this stretch: Cys-1217–Cys-1258, Cys-1244–Cys-1273, Cys-1277–Cys-1304, Cys-1391–Cys-1431, Cys-1417–Cys-1447, Cys-1451–Cys-1477, Cys-1564–Cys-1604, Cys-1590–Cys-1621, Cys-1625–Cys-1651, Cys-1741–Cys-1781, Cys-1767–Cys-1798, and Cys-1802–Cys-1828. The region spanning 1277 to 1386 (CGGLVHAATS…SGFSIQFSTS (110 aa)) is the CUB 8 domain. Residues 1389 to 1449 (STCNDPGMPQ…WQPDPPSCIA (61 aa)) form the Sushi 8 domain. A glycan (N-linked (GlcNAc...) asparagine) is linked at Asn-1399. Residues 1451–1559 (CGGNLTGPAG…SGFAIEFKEK (109 aa)) form the CUB 9 domain. Residues Asn-1454 and Asn-1572 are each glycosylated (N-linked (GlcNAc...) asparagine). Positions 1562–1623 (EACFDPGNIM…WDRALPACQA (62 aa)) constitute a Sushi 9 domain. The CUB 10 domain occupies 1625 to 1733 (CGGQYTGSEG…RGFHFVYQAV (109 aa)). An N-linked (GlcNAc...) asparagine glycan is attached at Asn-1644. Positions 1739 to 1800 (TQCSSVPEPR…WNDTIPSCVV (62 aa)) constitute a Sushi 10 domain. Asn-1792, Asn-1805, and Asn-1882 each carry an N-linked (GlcNAc...) asparagine glycan. In terms of domain architecture, CUB 11 spans 1802 to 1910 (CSGNFTQRRG…AGFHLEYKTV (109 aa)). The 60-residue stretch at 1913–1972 (AACQEPALPSNGIKIGDRYMVNDVLSFQCEPGYTLQGRSHISCMPGTVRRWNYPSPLCIA) folds into the Sushi 11 domain. Cystine bridges form between Cys-1915-Cys-1955, Cys-1941-Cys-1970, and Cys-1974-Cys-2000. One can recognise a CUB 12 domain in the interval 1974 to 2082 (CGGTLTSMSG…QGFKLSYQAY (109 aa)). Asn-2018 is a glycosylation site (N-linked (GlcNAc...) asparagine). Residues 2085-2144 (QNCPDPPAFQNGFMINSDYSVGQSISFECYPGYILLGHPVLTCQHGTDRNWNYPFPRCDA) form the Sushi 12 domain. 3 disulfides stabilise this stretch: Cys-2087/Cys-2127, Cys-2113/Cys-2142, and Cys-2146/Cys-2172. Residues 2146 to 2257 (CGYNVTSQNG…LNFHAFQLKR (112 aa)) form the CUB 13 domain. Asn-2149, Asn-2154, and Asn-2187 each carry an N-linked (GlcNAc...) asparagine glycan. Residues 2256-2317 (KRCPPPPAVP…FQGSPPTCEA (62 aa)) enclose the Sushi 13 domain. 3 disulfides stabilise this stretch: Cys-2258–Cys-2300, Cys-2286–Cys-2315, and Cys-2319–Cys-2347. Positions 2319–2430 (CPANEVRTES…KGFKIRYAAP (112 aa)) constitute a CUB 14 domain. Asn-2358, Asn-2394, Asn-2400, Asn-2445, Asn-2470, and Asn-2503 each carry an N-linked (GlcNAc...) asparagine glycan. Sushi domains follow at residues 2430-2492 (PYCS…LCQA), 2493-2554 (VSCG…TCKP), 2555-2619 (VPCP…RCKV), 2620-2677 (ISCG…RCLA), 2678-2735 (GHCG…VCVP), 2736-2793 (ITCG…ICRV), 2794-2856 (VNCS…KCLA), 2857-2914 (ISCG…HCSG), 2918-2975 (GFCG…VCEA), 2976-3034 (VSCG…DCTI), 3035-3094 (ISCG…LCKA), 3095-3152 (VLCN…QCLP), 3153-3210 (VFCG…TCID), 3214-3272 (TACP…ECIP), and 3273-3332 (HACR…VCKS). Intrachain disulfides connect Cys-2432–Cys-2473, Cys-2459–Cys-2490, Cys-2495–Cys-2537, Cys-2521–Cys-2552, Cys-2557–Cys-2602, Cys-2588–Cys-2617, Cys-2622–Cys-2662, Cys-2648–Cys-2675, Cys-2680–Cys-2720, Cys-2706–Cys-2733, Cys-2738–Cys-2778, and Cys-2764–Cys-2791. Asn-2605 carries N-linked (GlcNAc...) asparagine glycosylation. 2 N-linked (GlcNAc...) asparagine glycosylation sites follow: Asn-2750 and Asn-2761. An N-linked (GlcNAc...) asparagine glycan is attached at Asn-2795. Intrachain disulfides connect Cys-2796–Cys-2841, Cys-2827–Cys-2854, Cys-2859–Cys-2899, Cys-2885–Cys-2912, Cys-2920–Cys-2960, Cys-2946–Cys-2973, Cys-2978–Cys-3019, Cys-3005–Cys-3032, Cys-3037–Cys-3079, Cys-3063–Cys-3092, Cys-3097–Cys-3137, Cys-3123–Cys-3150, Cys-3155–Cys-3195, Cys-3181–Cys-3208, Cys-3216–Cys-3257, Cys-3243–Cys-3270, Cys-3275–Cys-3317, and Cys-3302–Cys-3330. A glycan (N-linked (GlcNAc...) asparagine) is linked at Asn-2894. An N-linked (GlcNAc...) asparagine glycan is attached at Asn-2963. N-linked (GlcNAc...) asparagine glycans are attached at residues Asn-3022, Asn-3056, and Asn-3086. N-linked (GlcNAc...) asparagine glycans are attached at residues Asn-3228 and Asn-3260. Asn-3339, Asn-3379, and Asn-3386 each carry an N-linked (GlcNAc...) asparagine glycan. The chain crosses the membrane as a helical span at residues 3488–3508 (VAAAILVPFFALILSGFAFYL). Residues 3509–3564 (YKHRTRPKVQYNGYAGHENSNGQASFENPMYDTNLKPTEAKAVRFDTTLNTVCTVV) are Cytoplasmic-facing.

Belongs to the CSMD family.

The protein localises to the membrane. This is CUB and sushi domain-containing protein 1 (Csmd1) from Mus musculus (Mouse).